We begin with the raw amino-acid sequence, 431 residues long: Serine--tRNA ligase (431 aa).

235 to 237 is a binding site for L-serine; it reads TAE. ATP is bound by residues 266 to 268 and Val-282; that span reads RRE. Glu-289 serves as a coordination point for L-serine. 353–356 serves as a coordination point for ATP; it reads EASS. L-serine is bound at residue Ser-389.

It belongs to the class-II aminoacyl-tRNA synthetase family. Type-1 seryl-tRNA synthetase subfamily. As to quaternary structure, homodimer. The tRNA molecule binds across the dimer.

It is found in the cytoplasm. It catalyses the reaction tRNA(Ser) + L-serine + ATP = L-seryl-tRNA(Ser) + AMP + diphosphate + H(+). The enzyme catalyses tRNA(Sec) + L-serine + ATP = L-seryl-tRNA(Sec) + AMP + diphosphate + H(+). It functions in the pathway aminoacyl-tRNA biosynthesis; selenocysteinyl-tRNA(Sec) biosynthesis; L-seryl-tRNA(Sec) from L-serine and tRNA(Sec): step 1/1. In terms of biological role, catalyzes the attachment of serine to tRNA(Ser). Is also able to aminoacylate tRNA(Sec) with serine, to form the misacylated tRNA L-seryl-tRNA(Sec), which will be further converted into selenocysteinyl-tRNA(Sec). This chain is Serine--tRNA ligase, found in Pelodictyon phaeoclathratiforme (strain DSM 5477 / BU-1).